A 184-amino-acid chain; its full sequence is Probable cobalt-precorrin-6B C(15)-methyltransferase (decarboxylating) (184 aa).

Residues threonine 12, 36-40, aspartate 59, and alanine 87 each bind S-adenosyl-L-methionine; that span reads GCGTG.

The protein belongs to the methyltransferase superfamily. Archaeal-type CbiT family.

It catalyses the reaction Co-precorrin-6B + S-adenosyl-L-methionine = Co-precorrin-7 + S-adenosyl-L-homocysteine + CO2. It functions in the pathway cofactor biosynthesis; adenosylcobalamin biosynthesis; cob(II)yrinate a,c-diamide from sirohydrochlorin (anaerobic route): step 8/10. Catalyzes the methylation of C-15 in cobalt-precorrin-6B followed by the decarboxylation of C-12 to form cobalt-precorrin-7. This is Probable cobalt-precorrin-6B C(15)-methyltransferase (decarboxylating) from Methanosarcina mazei (strain ATCC BAA-159 / DSM 3647 / Goe1 / Go1 / JCM 11833 / OCM 88) (Methanosarcina frisia).